A 212-amino-acid polypeptide reads, in one-letter code: Methylthioribulose-1-phosphate dehydratase (212 aa).

Residues histidine 97 and histidine 99 each contribute to the Zn(2+) site.

The protein belongs to the aldolase class II family. MtnB subfamily. Homotetramer. Zn(2+) is required as a cofactor.

It carries out the reaction 5-(methylsulfanyl)-D-ribulose 1-phosphate = 5-methylsulfanyl-2,3-dioxopentyl phosphate + H2O. Its pathway is amino-acid biosynthesis; L-methionine biosynthesis via salvage pathway; L-methionine from S-methyl-5-thio-alpha-D-ribose 1-phosphate: step 2/6. Functionally, catalyzes the dehydration of methylthioribulose-1-phosphate (MTRu-1-P) into 2,3-diketo-5-methylthiopentyl-1-phosphate (DK-MTP-1-P). This Bacillus cereus (strain ZK / E33L) protein is Methylthioribulose-1-phosphate dehydratase.